Here is a 118-residue protein sequence, read N- to C-terminus: C-X-C motif chemokine 17 (118 aa).

The signal sequence occupies residues 1 to 22; it reads MKVLISSLLLLLPLMLMSVVSS. Disulfide bonds link cysteine 74–cysteine 102 and cysteine 76–cysteine 109.

Belongs to the intercrine alpha (chemokine CxC) family.

It localises to the secreted. Functionally, chemokine that acts as a chemoattractant for monocytes, macrophages and dendritic cells. Plays a role in angiogenesis and possibly in the development of tumors. Acts as an anti-inflammatory in the stomach. May play a role in the innate defense against infections. Activates the C-X-C chemokine receptor GPR35 to induce a rapid and transient rise in the level of intracellular calcium ions. The polypeptide is C-X-C motif chemokine 17 (CXCL17) (Bos taurus (Bovine)).